The following is a 78-amino-acid chain: Ferredoxin (78 aa).

2 4Fe-4S ferredoxin-type domains span residues phenylalanine 2 to proline 29 and aspartate 30 to phenylalanine 59. Residues cysteine 8 and cysteine 16 each coordinate [3Fe-4S] cluster. Cysteine 20, cysteine 39, cysteine 42, and cysteine 45 together coordinate [4Fe-4S] cluster. Cysteine 49 is a binding site for [3Fe-4S] cluster.

It depends on [3Fe-4S] cluster as a cofactor. [4Fe-4S] cluster is required as a cofactor.

Functionally, ferredoxins are iron-sulfur proteins that transfer electrons in a wide variety of metabolic reactions. The polypeptide is Ferredoxin (Alicyclobacillus acidocaldarius subsp. acidocaldarius (Bacillus acidocaldarius)).